A 330-amino-acid polypeptide reads, in one-letter code: PDZ and LIM domain protein 4 (330 aa).

The 77-residue stretch at 8–84 folds into the PDZ domain; the sequence is RGPSPWGFRL…QLLLSVSRAE (77 aa). Disordered regions lie at residues 106-152 and 163-182; these read EPEP…SSSA and LHISPSQSTDPLKSLPRNRN. Positions 139–152 are enriched in polar residues; that stretch reads QHPQPSRPHASSSA. Residues 255-305 form the LIM zinc-binding domain; sequence CTRCGNGIVGTIVKARDKLYHPECFMCDDCGLNLKQRGYFFIEEQLYCETH.

As to quaternary structure, interacts (via LIM domain) with PTPN13. Interacts (via PDZ domain) with ACTN1.

The protein resides in the cytoplasm. It is found in the cytoskeleton. It localises to the cell projection. The protein localises to the dendritic spine. Its subcellular location is the early endosome membrane. The protein resides in the recycling endosome membrane. It is found in the nucleus. It localises to the perinuclear region. The protein localises to the lamellipodium. Its subcellular location is the synapse. The protein resides in the synaptosome. Its function is as follows. Suppresses SRC activation by recognizing and binding to active SRC and facilitating PTPN13-mediated dephosphorylation of SRC 'Tyr-419' leading to its inactivation. Inactivated SRC dissociates from this protein allowing the initiation of a new SRC inactivation cycle. Involved in reorganization of the actin cytoskeleton. In nonmuscle cells, binds to ACTN1 (alpha-actinin-1), increases the affinity of ACTN1 to F-actin (filamentous actin), and promotes formation of actin stress fibers. Involved in regulation of the synaptic AMPA receptor transport in dendritic spines of hippocampal pyramidal neurons directing the receptors toward an insertion at the postsynaptic membrane. Links endosomal surface-internalized GRIA1-containing AMPA receptors to the alpha-actinin/actin cytoskeleton. Increases AMPA receptor-mediated excitatory postsynaptic currents in neurons. This chain is PDZ and LIM domain protein 4 (PDLIM4), found in Gallus gallus (Chicken).